A 240-amino-acid chain; its full sequence is Phosphoribosylaminoimidazole-succinocarboxamide synthase (240 aa).

The protein belongs to the SAICAR synthetase family.

The enzyme catalyses 5-amino-1-(5-phospho-D-ribosyl)imidazole-4-carboxylate + L-aspartate + ATP = (2S)-2-[5-amino-1-(5-phospho-beta-D-ribosyl)imidazole-4-carboxamido]succinate + ADP + phosphate + 2 H(+). The protein operates within purine metabolism; IMP biosynthesis via de novo pathway; 5-amino-1-(5-phospho-D-ribosyl)imidazole-4-carboxamide from 5-amino-1-(5-phospho-D-ribosyl)imidazole-4-carboxylate: step 1/2. The sequence is that of Phosphoribosylaminoimidazole-succinocarboxamide synthase from Acidithiobacillus ferrooxidans (strain ATCC 23270 / DSM 14882 / CIP 104768 / NCIMB 8455) (Ferrobacillus ferrooxidans (strain ATCC 23270)).